The following is a 291-amino-acid chain: Small ribosomal subunit protein uS2 (291 aa).

The tract at residues 256–291 (LRGEGTAPAASEEQPAEEPAPAAAEAQTDAAVGTAV) is disordered. The segment covering 261–291 (TAPAASEEQPAEEPAPAAAEAQTDAAVGTAV) has biased composition (low complexity).

This sequence belongs to the universal ribosomal protein uS2 family.

In Frankia alni (strain DSM 45986 / CECT 9034 / ACN14a), this protein is Small ribosomal subunit protein uS2.